We begin with the raw amino-acid sequence, 148 residues long: Large ribosomal subunit protein bL9 (148 aa).

The protein belongs to the bacterial ribosomal protein bL9 family.

Its function is as follows. Binds to the 23S rRNA. The protein is Large ribosomal subunit protein bL9 of Geobacter metallireducens (strain ATCC 53774 / DSM 7210 / GS-15).